The sequence spans 765 residues: Amine oxidase [copper-containing] 3 (765 aa).

The Cytoplasmic segment spans residues 1 to 6 (MTQKTT). Residues 7–27 (LVLLALAVITIFALVCVLLAG) traverse the membrane as a helical; Signal-anchor for type II membrane protein segment. Residues 28-765 (RSGDGGGLSQ…SHGGFAYRDN (738 aa)) lie on the Extracellular side of the membrane. Asn137 is a glycosylation site (N-linked (GlcNAc...) asparagine). A disulfide bridge links Cys198 with Cys199. 2 N-linked (GlcNAc...) asparagine glycosylation sites follow: Asn232 and Asn294. Asp386 (proton acceptor) is an active-site residue. Residues Cys404 and Cys430 are joined by a disulfide bond. Tyr471 (schiff-base intermediate with substrate; via topaquinone) is an active-site residue. 2',4',5'-topaquinone is present on Tyr471. His520 and His522 together coordinate Cu(2+). Ca(2+) is bound by residues Asp529, Leu530, Asp531, and Glu572. N-linked (GlcNAc...) asparagine glycosylation occurs at Asn592. Glu641 is a binding site for Ca(2+). Asn659 is a glycosylation site (N-linked (GlcNAc...) asparagine). A Ca(2+)-binding site is contributed by Phe663. N-linked (GlcNAc...) asparagine glycosylation is present at Asn666. Ca(2+) contacts are provided by Glu667, Asp673, and Leu674. Cu(2+) is bound at residue His684. A disulfide bond links Cys734 and Cys741.

Belongs to the copper/topaquinone oxidase family. In terms of assembly, homodimer; disulfide-linked. Probably forms heterodimers with AOC2. Cu(2+) is required as a cofactor. It depends on Ca(2+) as a cofactor. Requires L-topaquinone as cofactor. Topaquinone (TPQ) is generated by copper-dependent autoxidation of a specific tyrosyl residue. Post-translationally, N- and O-glycosylated.

Its subcellular location is the cell membrane. The enzyme catalyses methylamine + O2 + H2O = formaldehyde + H2O2 + NH4(+). It carries out the reaction benzylamine + O2 + H2O = benzaldehyde + H2O2 + NH4(+). The catalysed reaction is 2-phenylethylamine + O2 + H2O = 2-phenylacetaldehyde + H2O2 + NH4(+). Catalyzes the oxidative deamination of primary amines to the corresponding aldehydes with the concomitant production of hydrogen peroxide and ammonia. Has a preference for the primary monoamines methylamine and benzylamine. Could also act on 2-phenylethylamine but much less efficiently. At endothelial cells surface can also function as a cell adhesion protein that participates in lymphocyte extravasation and recirculation by mediating the binding of lymphocytes to peripheral lymph node vascular endothelial cells in an L-selectin-independent fashion. The protein is Amine oxidase [copper-containing] 3 of Mus musculus (Mouse).